Here is a 500-residue protein sequence, read N- to C-terminus: Probable cytosol aminopeptidase (500 aa).

Residues Lys-264 and Asp-269 each contribute to the Mn(2+) site. Lys-276 is an active-site residue. Residues Asp-287, Asp-346, and Glu-348 each coordinate Mn(2+). The active site involves Arg-350.

Belongs to the peptidase M17 family. The cofactor is Mn(2+).

Its subcellular location is the cytoplasm. The catalysed reaction is Release of an N-terminal amino acid, Xaa-|-Yaa-, in which Xaa is preferably Leu, but may be other amino acids including Pro although not Arg or Lys, and Yaa may be Pro. Amino acid amides and methyl esters are also readily hydrolyzed, but rates on arylamides are exceedingly low.. It catalyses the reaction Release of an N-terminal amino acid, preferentially leucine, but not glutamic or aspartic acids.. Presumably involved in the processing and regular turnover of intracellular proteins. Catalyzes the removal of unsubstituted N-terminal amino acids from various peptides. This is Probable cytosol aminopeptidase from Rickettsia canadensis (strain McKiel).